Here is a 60-residue protein sequence, read N- to C-terminus: Protein CADMIUM TOLERANCE 4 (60 aa).

Residues 26 to 42 form a helical membrane-spanning segment; sequence GFLYACLFMLCCCFCCY.

It belongs to the CYSTM1 family. As to expression, mainly expressed in shoots, and, to a lower extent, in roots.

The protein resides in the cell membrane. It localises to the secreted. The protein localises to the cell wall. Its function is as follows. Confers resistance to heavy metal ions (e.g. aluminium (Al)) by chelating them at the plasma membrane of root cells, thus stopping their entry and reducing their accumulation. The sequence is that of Protein CADMIUM TOLERANCE 4 from Oryza sativa subsp. japonica (Rice).